Reading from the N-terminus, the 307-residue chain is Transcription initiation factor IIB 2 (307 aa).

The TFIIB-type zinc finger occupies 7–38 (TPKRCPECNSEHLIRDYEHGELICADCGAVIE). Positions 11, 14, 30, and 33 each coordinate Zn(2+). 2 tandem repeats follow at residues 124–207 (QLLN…AKEL) and 218–299 (SYIS…EISK).

It belongs to the TFIIB family.

In terms of biological role, stabilizes TBP binding to an archaeal box-A promoter. Also responsible for recruiting RNA polymerase II to the pre-initiation complex (DNA-TBP-TFIIB). The polypeptide is Transcription initiation factor IIB 2 (Thermoplasma acidophilum (strain ATCC 25905 / DSM 1728 / JCM 9062 / NBRC 15155 / AMRC-C165)).